We begin with the raw amino-acid sequence, 393 residues long: MTNQNLETNLETILNRALQGYDLSPAETLLLLSPTTKPNLGKLALTELPAEITAIQKTADQLRQQQVGDTVTYVINRNINFTNICEQHCSFCAFRRDDGKTGAFWLDINQILAKANDAVQRGATEICMQGGLNLQAKVAGKSLPYYLQLVREIKNEFSHLHLHAFSPQEVQFIAREDGVSYEYVIAALRDAGVHSMPGTAAEVLDDAVRRIICPEKIDTGTWLEIVGTAHRLGMPTTSTMLCGHIETPKQQILHLERLRSLQQTAIEKDYPARITEFILLPFVGQEAPAPLRRRVGHDQPILLDVLLLTAVSRIFLGNWIINHQPSWVKIGLDGAKEALKWGCNDIGGTLMEEHITTMAGAIGGTFMEVKNLQEAITSLGRNYQQRDTLYKYL.

The Radical SAM core domain maps to 71-318; sequence VTYVINRNIN…TAVSRIFLGN (248 aa). Residues C85, C89, and C92 each contribute to the [4Fe-4S] cluster site.

The protein belongs to the radical SAM superfamily. CofH family. Consists of two subunits, CofG and CofH. It depends on [4Fe-4S] cluster as a cofactor.

It catalyses the reaction 5-amino-6-(D-ribitylamino)uracil + L-tyrosine + S-adenosyl-L-methionine = 5-amino-5-(4-hydroxybenzyl)-6-(D-ribitylimino)-5,6-dihydrouracil + 2-iminoacetate + 5'-deoxyadenosine + L-methionine + H(+). The protein operates within cofactor biosynthesis; coenzyme F0 biosynthesis. Catalyzes the radical-mediated synthesis of 5-amino-5-(4-hydroxybenzyl)-6-(D-ribitylimino)-5,6-dihydrouracil from 5-amino-6-(D-ribitylamino)uracil and L-tyrosine. The polypeptide is 5-amino-6-(D-ribitylamino)uracil--L-tyrosine 4-hydroxyphenyl transferase (Trichodesmium erythraeum (strain IMS101)).